Consider the following 144-residue polypeptide: Snake venom vascular endothelial growth factor toxin cratrin (144 aa).

The N-terminal stretch at 1 to 24 (MAVYLLAVAILFCIQGWPSGTVQG) is a signal peptide. Q25 bears the Pyrrolidone carboxylic acid mark. 3 disulfides stabilise this stretch: C38-C80, C69-C115, and C73-C117. Positions 119 to 144 (PRSTVNNGKRKKNPKEGEPRAKFPLV) are disordered. Residues 132–144 (PKEGEPRAKFPLV) show a composition bias toward basic and acidic residues.

This sequence belongs to the PDGF/VEGF growth factor family. Snake venom VEGF subfamily. Homodimer; disulfide-linked. Interacts with VEGF receptor-1 (FLT1) with a high affinity, whereas it binds to VEGF receptor-2 (KDR) with a low affinity. Does not bind VEGF receptor-3 (FLT4). As to expression, expressed by the venom gland.

It is found in the secreted. Snake venom VEGFs that may contribute to venom dispersion and prey subjugation by inducing vascular permeability and hypotension. This protein induces an increase in capillary permeability after intradermal injection, as well as a drastic hypotensive effect after intravenous injection. The hypotension is mediated by nitric oxide (NO), which is produced by VEGF-activated endothelium NO synthase. Also induces angiogenesis in vitro. Like other crotalid VEGFs, this protein interacts with VEGF receptor-1 (FLT1) with a high affinity, whereas it binds to VEGF receptor-2 (KDR) with a low affinity. In Crotalus atrox (Western diamondback rattlesnake), this protein is Snake venom vascular endothelial growth factor toxin cratrin.